The following is a 1161-amino-acid chain: Nardilysin (1161 aa).

A signal peptide spans 1 to 18 (MLRRVAVAAVFATGRKLR). Disordered regions lie at residues 42–105 (KPFP…KSPS) and 130–218 (VEGK…KKTT). 3 positions are modified to phosphoserine: Ser85, Ser91, and Ser93. Positions 138–209 (TDEEEEEEEE…EENELEELEE (72 aa)) are enriched in acidic residues. Position 244 (His244) interacts with Zn(2+). Glu247 (proton acceptor) is an active-site residue. 2 residues coordinate Zn(2+): His248 and Glu325.

It belongs to the peptidase M16 family. Interacts with BACE1 and NRG1. The cofactor is Zn(2+). Testis, and in a lower level in brain, heart and adrenal glands.

The protein resides in the mitochondrion. Its subcellular location is the cell projection. It is found in the dendrite. It catalyses the reaction Hydrolysis of polypeptides, preferably at -Xaa-|-Arg-Lys-, and less commonly at -Arg-|-Arg-Xaa-, in which Xaa is not Arg or Lys.. Cleaves peptide substrates on the N-terminus of arginine residues in dibasic pairs. Is a critical activator of BACE1- and ADAM17-mediated pro-neuregulin ectodomain shedding, involved in the positive regulation of axonal maturation and myelination. Required for proper functioning of 2-oxoglutarate dehydrogenase (OGDH). This chain is Nardilysin, found in Rattus norvegicus (Rat).